The sequence spans 497 residues: MGGYILAIDQGTTSTRAIVFDGKQQVAGVGQKEFKQYFPKSGWVEHDPEEIWETVLFTARQAIEKAGISATDIAAIGITNQRETVVVWDRATGKPIHNAIVWQDRRTASFCDKLKKQGLEKTFSKKTGLLLDPYFSGTKLNWLLTNVKGAPARAAKGELCFGTVDTFLIWRLTGGKSFVTDATNASRTLIYNIVDNSWDDELTDILRIPRVMLPEVKDCAADFGVTDASLFGAAIPILGVAGDQQAATIGQACFKPGMLKSTYGTGCFALLNTGKDIVRSKNRLLTTIAYRLNGETTYALEGSIFVAGAAVQWLRDGLKVIKAAPDTGTLAESADPTQDVYLVPAFTGLGAPHWDPDARGAIYGMTRNTGPAEFARAALESVCYQTRDLLDAMHRDWRSNGKDTVLRVDGGMVASDWTMQRLSDLLDAPVDRPVILETTALGVAWLAGSRAGVWPKQEEFAKSWARDRRFEPKMDGTTRKGKLKGWRSAVKRTLMAA.

Thr12 is a binding site for ADP. Thr12, Thr13, and Ser14 together coordinate ATP. Thr12 is a sn-glycerol 3-phosphate binding site. Arg16 serves as a coordination point for ADP. Sn-glycerol 3-phosphate is bound by residues Arg82, Glu83, Tyr134, and Asp243. 5 residues coordinate glycerol: Arg82, Glu83, Tyr134, Asp243, and Gln244. Residues Thr265 and Gly308 each coordinate ADP. Positions 265, 308, 312, and 411 each coordinate ATP. Gly411 is a binding site for ADP.

It belongs to the FGGY kinase family.

The enzyme catalyses glycerol + ATP = sn-glycerol 3-phosphate + ADP + H(+). It participates in polyol metabolism; glycerol degradation via glycerol kinase pathway; sn-glycerol 3-phosphate from glycerol: step 1/1. Inhibited by fructose 1,6-bisphosphate (FBP). Its function is as follows. Key enzyme in the regulation of glycerol uptake and metabolism. Catalyzes the phosphorylation of glycerol to yield sn-glycerol 3-phosphate. This chain is Glycerol kinase, found in Sinorhizobium fredii (strain NBRC 101917 / NGR234).